The sequence spans 309 residues: Cytochrome c biogenesis protein CcsA (309 aa).

8 helical membrane passes run 18–38, 43–63, 73–93, 102–122, 148–168, 216–236, 250–267, and 279–299; these read LGLLVFYFLLINLPISLGAVF, SFAVRLITILVNLLITLQLLF, ISNLYESLYFLAWGITLGQLL, IIPSIAIPIELLIVSFACFVL, VMLSYAALIIGSLLSMSVLFI, SILIGFVLLTLGLISGAVWAN, TWAFISWLFYAAYLHMRI, and LASTGFLVVLVCYLGVNFLGI.

The protein belongs to the CcmF/CycK/Ccl1/NrfE/CcsA family. In terms of assembly, may interact with ccs1.

The protein resides in the cellular thylakoid membrane. Required during biogenesis of c-type cytochromes (cytochrome c6 and cytochrome f) at the step of heme attachment. The polypeptide is Cytochrome c biogenesis protein CcsA (Prochlorococcus marinus (strain MIT 9301)).